Consider the following 256-residue polypeptide: Large ribosomal subunit protein eL8y (256 aa).

The segment covering 1 to 15 (MAPKKGVKVASKKKP) has biased composition (basic residues). The disordered stretch occupies residues 1–20 (MAPKKGVKVASKKKPEKVTN).

Belongs to the eukaryotic ribosomal protein eL8 family.

This Arabidopsis thaliana (Mouse-ear cress) protein is Large ribosomal subunit protein eL8y (RPL7AB).